A 245-amino-acid polypeptide reads, in one-letter code: 1-(5-phosphoribosyl)-5-[(5-phosphoribosylamino)methylideneamino] imidazole-4-carboxamide isomerase (245 aa).

Catalysis depends on aspartate 7, which acts as the Proton acceptor. The active-site Proton donor is the aspartate 129.

It belongs to the HisA/HisF family.

The protein resides in the cytoplasm. The enzyme catalyses 1-(5-phospho-beta-D-ribosyl)-5-[(5-phospho-beta-D-ribosylamino)methylideneamino]imidazole-4-carboxamide = 5-[(5-phospho-1-deoxy-D-ribulos-1-ylimino)methylamino]-1-(5-phospho-beta-D-ribosyl)imidazole-4-carboxamide. It functions in the pathway amino-acid biosynthesis; L-histidine biosynthesis; L-histidine from 5-phospho-alpha-D-ribose 1-diphosphate: step 4/9. The sequence is that of 1-(5-phosphoribosyl)-5-[(5-phosphoribosylamino)methylideneamino] imidazole-4-carboxamide isomerase from Shewanella frigidimarina (strain NCIMB 400).